Consider the following 332-residue polypeptide: Ferredoxin--NADP reductase (332 aa).

FAD is bound by residues Asp33, Gln41, Tyr46, Ala86, Ile121, Asp282, and Ser325.

Belongs to the ferredoxin--NADP reductase type 2 family. Homodimer. Requires FAD as cofactor.

The catalysed reaction is 2 reduced [2Fe-2S]-[ferredoxin] + NADP(+) + H(+) = 2 oxidized [2Fe-2S]-[ferredoxin] + NADPH. This Metallosphaera sedula (strain ATCC 51363 / DSM 5348 / JCM 9185 / NBRC 15509 / TH2) protein is Ferredoxin--NADP reductase.